Here is a 353-residue protein sequence, read N- to C-terminus: Phosphate acyltransferase (353 aa).

The protein belongs to the PlsX family. In terms of assembly, homodimer. Probably interacts with PlsY.

It is found in the cytoplasm. The enzyme catalyses a fatty acyl-[ACP] + phosphate = an acyl phosphate + holo-[ACP]. It participates in lipid metabolism; phospholipid metabolism. In terms of biological role, catalyzes the reversible formation of acyl-phosphate (acyl-PO(4)) from acyl-[acyl-carrier-protein] (acyl-ACP). This enzyme utilizes acyl-ACP as fatty acyl donor, but not acyl-CoA. The protein is Phosphate acyltransferase of Rhodopseudomonas palustris (strain BisB5).